The following is a 687-amino-acid chain: Polyphosphate kinase (687 aa).

Asn-45 serves as a coordination point for ATP. Residues Arg-375 and Arg-405 each contribute to the Mg(2+) site. His-435 acts as the Phosphohistidine intermediate in catalysis. ATP-binding residues include Tyr-472, Arg-568, and His-596.

Belongs to the polyphosphate kinase 1 (PPK1) family. The cofactor is Mg(2+). Post-translationally, an intermediate of this reaction is the autophosphorylated ppk in which a phosphate is covalently linked to a histidine residue through a N-P bond.

The enzyme catalyses [phosphate](n) + ATP = [phosphate](n+1) + ADP. Functionally, catalyzes the reversible transfer of the terminal phosphate of ATP to form a long-chain polyphosphate (polyP). This Burkholderia cenocepacia (strain HI2424) protein is Polyphosphate kinase.